A 512-amino-acid chain; its full sequence is Maturase K (512 aa).

This sequence belongs to the intron maturase 2 family. MatK subfamily.

It is found in the plastid. It localises to the chloroplast. Its function is as follows. Usually encoded in the trnK tRNA gene intron. Probably assists in splicing its own and other chloroplast group II introns. The protein is Maturase K of Zantedeschia aethiopica (White calla lily).